The following is a 596-amino-acid chain: UvrABC system protein C (596 aa).

The region spanning 14 to 91 (QQPGCYLMKD…IKKYDPRYNV (78 aa)) is the GIY-YIG domain. The UVR domain maps to 196-231 (KDIRKNLAGEMQKASEALNFERAKEIRDTIQHIDAT).

It belongs to the UvrC family. Interacts with UvrB in an incision complex.

It is found in the cytoplasm. Its function is as follows. The UvrABC repair system catalyzes the recognition and processing of DNA lesions. UvrC both incises the 5' and 3' sides of the lesion. The N-terminal half is responsible for the 3' incision and the C-terminal half is responsible for the 5' incision. This chain is UvrABC system protein C, found in Oceanobacillus iheyensis (strain DSM 14371 / CIP 107618 / JCM 11309 / KCTC 3954 / HTE831).